Reading from the N-terminus, the 385-residue chain is Putative non-inhibitory serpin-Z11 (385 aa).

Residues 324 to 348 (GTTAVEAMYSPSSPGYSPGYQPPRP) are RCL.

This sequence belongs to the serpin family.

This Oryza sativa subsp. japonica (Rice) protein is Putative non-inhibitory serpin-Z11.